The chain runs to 303 residues: Glutathione transport system permease protein GsiD (303 aa).

Transmembrane regions (helical) follow at residues 40–60 (AMTAALFVILLIVVAIFARWI), 105–125 (LAAGVFAVFIGVAIGTLLGLL), 144–164 (LFAFPGILLAIAVVAVLGSGI), 165–185 (ANVIIAVAIFSIPAFARLVRG), 222–242 (IVVFFTMRIGTSIISAASLSF), and 266–286 (VIAPHVAVFPALAIFLTVLAF). One can recognise an ABC transmembrane type-1 domain in the interval 101–290 (AQISLAAGVF…LTVLAFNLLG (190 aa)).

The protein belongs to the binding-protein-dependent transport system permease family. In terms of assembly, the complex is composed of two ATP-binding proteins (GsiA), two transmembrane proteins (GsiC and GsiD) and a solute-binding protein (GsiB).

The protein localises to the cell inner membrane. Part of the ABC transporter complex GsiABCD involved in glutathione import. Probably responsible for the translocation of the substrate across the membrane. The chain is Glutathione transport system permease protein GsiD from Shigella flexneri serotype 5b (strain 8401).